Reading from the N-terminus, the 489-residue chain is MSRRNFKVLYISGEVSPFVRTSALADFMASFPQALEEEGFEARIMMPKYGAINDRKFRLHDVLRLSDIEVPLKEKTDLLNVKVTALPSSKIQTYFLYNEKYFKRNGLFTDTPVQGELKALAEKVAFFNVGVLETLQRLGWRPDIIHCHDWYASLVPLLLKTVYRDHEFFRGIKTAMTIHNVYRQGVLPFKVLKKLLPDEVCSELHRSGDDVNMLYTGVEHADMLTTTSPSYAEEITGEAGNAFGLSEVLGERNMTLHGIVNGIDTRQWNPSTDKLIKKRYAPERMEGKTENKRALLEEIKLSPDTDRPVVGVIINFDEFQGAGLIAGSLKKLAAMDIQLVICGSGDQKYEKQFREFADAHPETVSLHTDCPDSFIHLAIAGFDILLMPGKIESCGMLQMFAMSYGTIPVAFAGGGIVETIDDYSEKDGYGFIFHDYTPKALVARLGAAVALYHDSERWKEIVGRAMARDFGWKHSAEEYGGLYRELLES.

Arginine 20 is an ADP-alpha-D-glucose binding site.

The protein belongs to the glycosyltransferase 1 family. Bacterial/plant glycogen synthase subfamily.

It catalyses the reaction [(1-&gt;4)-alpha-D-glucosyl](n) + ADP-alpha-D-glucose = [(1-&gt;4)-alpha-D-glucosyl](n+1) + ADP + H(+). It participates in glycan biosynthesis; glycogen biosynthesis. Synthesizes alpha-1,4-glucan chains using ADP-glucose. This Chlorobium phaeovibrioides (strain DSM 265 / 1930) (Prosthecochloris vibrioformis (strain DSM 265)) protein is Glycogen synthase.